The chain runs to 1295 residues: Serine protease pet autotransporter (1295 aa).

A signal peptide spans 1-52 (MNKIYSIKYSAATGGLIAVSELAKKVICKTNRKISAALLSLAVISYTNIIYA). A Peptidase S6 domain is found at 54–304 (NMDISKAWAR…TPFDSKTTNE (251 aa)). Active-site charge relay system residues include H124, D153, and S260. The region spanning 1029–1295 (DINGEAGAWA…AINANFRYSF (267 aa)) is the Autotransporter domain.

Post-translationally, cleaved to release the mature protein from the outer membrane.

The protein resides in the periplasm. Its subcellular location is the secreted. It is found in the cell surface. The protein localises to the cell outer membrane. Inhibition of cytotoxic activity by phenylmethylsulfonyl fluoride. Serine protease with enterotoxic and cytotoxic activity. Internalization into the host cell is required for the induction of cytopathic effects. However, the serine activity is not necessary for secretion and internalization into the host cell. This chain is Serine protease pet autotransporter (pet), found in Escherichia coli O44:H18 (strain 042 / EAEC).